We begin with the raw amino-acid sequence, 504 residues long: MEELQSFLEKDRSWXQHFLYPLLFQEYIYVFAHDHGLNGSIFYEPVNFLGYDKKSSAVLVKRLIIRMYQQNHLICSFNESNRNRFVGHNYYSYFYSLMISEGVSLIVEIPFSLQLKSSIEEIHNLRSIHSIFPFLEDKLSXLNYLXDILIPHPIHMXILVQILQSRSPDAPSLHFLRLFLHQYHNWNSLITPKKSISVISKENKRLFXXLYNSYISECEFLLVFLRKQSSYLPLTSSGVFLERTYYYGKIQRILVWQNFFQKTLWVFKDPXMHYVRYQGKVILGSKGTNFLMKKWKFYFVNLWQYYFHFWSQPCRIHINQLSNYSFYFLGYFSNVLKNPLSVRNQMLENSFLMDTLTKKFDTLVPVIPLISSLSKAKFCTVSGHPISKPIWTDLSDCDIINRFGRICRNLSHYHSGSSKKQSLYRIKYILRLSCARTLARKHKSTVRIFMQRVSSGLLEEFFTEEERVLSLIFPQTTFFSLRGSQRERIWYLDIIRINDLVTNF.

It belongs to the intron maturase 2 family. MatK subfamily.

The protein resides in the plastid. The protein localises to the chloroplast. Functionally, usually encoded in the trnK tRNA gene intron. Probably assists in splicing its own and other chloroplast group II introns. This Eichhornia crassipes (Water hyacinth) protein is Maturase K.